The sequence spans 346 residues: Sensor histidine kinase GraS (346 aa).

A run of 2 helical transmembrane segments spans residues 15–35 and 43–63; these read MNWIFWILFLNFLMLGISLID and LFYIVSLNLSLTMIFLLLTYF. One can recognise a Histidine kinase domain in the interval 126–332; that stretch reads EFVHDIKTPV…TVRLIFPLQN (207 aa).

Interacts with GraX.

The protein resides in the cell membrane. The enzyme catalyses ATP + protein L-histidine = ADP + protein N-phospho-L-histidine.. Functionally, member of the two-component regulatory system GraR/GraS involved in resistance against cationic antimicrobial peptides (CAMPs). Functions as a sensor protein kinase which phosphorylates GraR through the auxiliary protein GraX. In turn, GraR up-regulates many genes such as adhesins, exoproteins, transporters, toxins, and proteins involved in cell wall synthesis. Down-regulates the expression of many genes involved in RNA and amino acid synthesis or glycolysis. The polypeptide is Sensor histidine kinase GraS (graS) (Staphylococcus aureus (strain COL)).